The chain runs to 156 residues: MAPARAGFCPLLLLLLLGLWVAEIPVSAKPKGMTSSQWFKIQHMQPSPQACNSAMKNINKHTKRCKDLNTFLHEPFSSVAATCQTPKIACKNGDKNCHQSHGAVSLTMCKLTSGKHPNCRYKEKRQNKSYVVACKPPQKKDSQQFHLVPVHLDRVL.

A signal peptide spans Met1–Ala28. The interval Lys29–Gly32 is important for antibacterial activity. His43 functions as the Proton acceptor in the catalytic mechanism. DUMP contacts are provided by His43, Lys66, Asn69, and Thr70. 4 cysteine pairs are disulfide-bonded: Cys51–Cys109, Cys65–Cys119, Cys83–Cys134, and Cys90–Cys97. The N-linked (GlcNAc...) asparagine glycan is linked to Asn127. The important for antibacterial activity stretch occupies residues Lys139–Lys140. Positions 151 and 154 each coordinate dUMP. The active-site Proton donor is the His151.

In terms of tissue distribution, expressed in collecting ducts in kidney, and in apical uroepithelium in bladder (at protein level). Expressed in various epithelial tissues including skin, respiratory tract, genito-urinary tract and, at a low level, in the gut. Expressed in liver, kidney, skeletal muscle and heart.

It localises to the secreted. In terms of biological role, exhibits a potent RNase activity. Has broad-spectrum antimicrobial activity against many pathogenic microorganisms including uropathogenic E.coli (UPEC), and remarkably potent activity (lethal dose of 90% &lt; 30 nM) against a vancomycin resistant Enterococcus faecium. Causes loss of bacterial membrane integrity. Probably contributes to urinary tract sterility. Bactericidal activity is independent of RNase activity. The chain is Ribonuclease 7 (RNASE7) from Homo sapiens (Human).